The following is a 283-amino-acid chain: Small ribosomal subunit protein uS3 (283 aa).

The 69-residue stretch at 39 to 107 folds into the KH type-2 domain; that stretch reads VRAYLKTKLK…PVHVNIEEIR (69 aa). Residues 219 to 283 form a disordered region; that stretch reads ASDDDKKRRG…AAVSAEKAGE (65 aa). Residues 221 to 236 are compositionally biased toward basic and acidic residues; it reads DDDKKRRGPRRDDGKP. A compositionally biased stretch (low complexity) spans 237 to 260; sequence SGRPRAPRPEGQPGAAAPGSAPAA.

The protein belongs to the universal ribosomal protein uS3 family. As to quaternary structure, part of the 30S ribosomal subunit. Forms a tight complex with proteins S10 and S14.

Binds the lower part of the 30S subunit head. Binds mRNA in the 70S ribosome, positioning it for translation. The polypeptide is Small ribosomal subunit protein uS3 (Janthinobacterium sp. (strain Marseille) (Minibacterium massiliensis)).